Consider the following 96-residue polypeptide: UPF0235 protein VV2877 (96 aa).

Belongs to the UPF0235 family.

This is UPF0235 protein VV2877 from Vibrio vulnificus (strain YJ016).